We begin with the raw amino-acid sequence, 404 residues long: Arginine biosynthesis bifunctional protein ArgJ (404 aa).

6 residues coordinate substrate: Thr156, Lys182, Thr193, Glu277, Asn399, and Ser404. Thr193 (nucleophile) is an active-site residue.

The protein belongs to the ArgJ family. Heterotetramer of two alpha and two beta chains.

The protein resides in the cytoplasm. It carries out the reaction N(2)-acetyl-L-ornithine + L-glutamate = N-acetyl-L-glutamate + L-ornithine. It catalyses the reaction L-glutamate + acetyl-CoA = N-acetyl-L-glutamate + CoA + H(+). It participates in amino-acid biosynthesis; L-arginine biosynthesis; L-ornithine and N-acetyl-L-glutamate from L-glutamate and N(2)-acetyl-L-ornithine (cyclic): step 1/1. It functions in the pathway amino-acid biosynthesis; L-arginine biosynthesis; N(2)-acetyl-L-ornithine from L-glutamate: step 1/4. Catalyzes two activities which are involved in the cyclic version of arginine biosynthesis: the synthesis of N-acetylglutamate from glutamate and acetyl-CoA as the acetyl donor, and of ornithine by transacetylation between N(2)-acetylornithine and glutamate. In Chlorobaculum tepidum (strain ATCC 49652 / DSM 12025 / NBRC 103806 / TLS) (Chlorobium tepidum), this protein is Arginine biosynthesis bifunctional protein ArgJ.